Here is a 127-residue protein sequence, read N- to C-terminus: Fluoride-specific ion channel FluC (127 aa).

Transmembrane regions (helical) follow at residues 4–24, 35–55, 71–91, and 103–123; these read LLLAVFIGGGTGSVARWLLSM, LGTLTANLIGAFIIGMGFAWF, TGFCGGLTTFSTFSAEVVFLL, and VFVNLLGSFAMTALAFWLFSA. Na(+)-binding residues include glycine 75 and threonine 78.

The protein belongs to the fluoride channel Fluc/FEX (TC 1.A.43) family.

The protein resides in the cell inner membrane. The enzyme catalyses fluoride(in) = fluoride(out). Its activity is regulated as follows. Na(+) is not transported, but it plays an essential structural role and its presence is essential for fluoride channel function. Functionally, fluoride-specific ion channel. Important for reducing fluoride concentration in the cell, thus reducing its toxicity. The protein is Fluoride-specific ion channel FluC of Escherichia coli (strain ATCC 8739 / DSM 1576 / NBRC 3972 / NCIMB 8545 / WDCM 00012 / Crooks).